Here is a 363-residue protein sequence, read N- to C-terminus: Chorismate synthase (363 aa).

NADP(+) contacts are provided by R48 and R54. FMN is bound by residues 125-127, 237-238, G277, 292-296, and R318; these read RSS, NA, and KPTSS.

It belongs to the chorismate synthase family. Homotetramer. Requires FMNH2 as cofactor.

The catalysed reaction is 5-O-(1-carboxyvinyl)-3-phosphoshikimate = chorismate + phosphate. Its pathway is metabolic intermediate biosynthesis; chorismate biosynthesis; chorismate from D-erythrose 4-phosphate and phosphoenolpyruvate: step 7/7. Functionally, catalyzes the anti-1,4-elimination of the C-3 phosphate and the C-6 proR hydrogen from 5-enolpyruvylshikimate-3-phosphate (EPSP) to yield chorismate, which is the branch point compound that serves as the starting substrate for the three terminal pathways of aromatic amino acid biosynthesis. This reaction introduces a second double bond into the aromatic ring system. The sequence is that of Chorismate synthase from Pseudomonas putida (strain GB-1).